Reading from the N-terminus, the 76-residue chain is MKLTCMMIVAVLFLTAWTVVTAVPHSNKRLANLYLKARHEMKNPEASNVDKRCFESWVACESPKRCCSHVCLFVCA.

The N-terminal stretch at 1 to 22 (MKLTCMMIVAVLFLTAWTVVTA) is a signal peptide. The propeptide occupies 23-50 (VPHSNKRLANLYLKARHEMKNPEASNVD). 3 cysteine pairs are disulfide-bonded: cysteine 53–cysteine 67, cysteine 60–cysteine 71, and cysteine 66–cysteine 75.

This sequence belongs to the conotoxin O1 superfamily. Expressed by the venom duct.

Its subcellular location is the secreted. The protein is Conotoxin PnMKLT1-1111 of Conus pennaceus (Feathered cone).